The following is a 136-amino-acid chain: Nucleoside diphosphate kinase (136 aa).

ATP is bound by residues Lys-10, Phe-58, Arg-86, Thr-92, Arg-104, and Asn-114. The active-site Pros-phosphohistidine intermediate is the His-117.

It belongs to the NDK family. As to quaternary structure, homotetramer. The cofactor is Mg(2+).

It is found in the cytoplasm. The catalysed reaction is a 2'-deoxyribonucleoside 5'-diphosphate + ATP = a 2'-deoxyribonucleoside 5'-triphosphate + ADP. It carries out the reaction a ribonucleoside 5'-diphosphate + ATP = a ribonucleoside 5'-triphosphate + ADP. Functionally, major role in the synthesis of nucleoside triphosphates other than ATP. The ATP gamma phosphate is transferred to the NDP beta phosphate via a ping-pong mechanism, using a phosphorylated active-site intermediate. The sequence is that of Nucleoside diphosphate kinase from Mycolicibacterium paratuberculosis (strain ATCC BAA-968 / K-10) (Mycobacterium paratuberculosis).